Reading from the N-terminus, the 238-residue chain is Transcriptional activator protein AnoR (238 aa).

The region spanning 170 to 236 (EFSQFNLYLT…SAAIRAVMLG (67 aa)) is the HTH luxR-type domain. Residues 195 to 214 (SAEIAQIIGVTERTVNFHLC) constitute a DNA-binding region (H-T-H motif).

Belongs to the autoinducer-regulated transcriptional regulatory protein family.

Its function is as follows. Positively regulates the expression of anoI. Required for biofilm formation and motility. Probably part of a quorum-sensing system with AnoI. The protein is Transcriptional activator protein AnoR of Acinetobacter nosocomialis.